The sequence spans 309 residues: tRNA pseudouridine synthase B (309 aa).

D45 functions as the Nucleophile in the catalytic mechanism.

Belongs to the pseudouridine synthase TruB family. Type 1 subfamily.

It catalyses the reaction uridine(55) in tRNA = pseudouridine(55) in tRNA. In terms of biological role, responsible for synthesis of pseudouridine from uracil-55 in the psi GC loop of transfer RNAs. The sequence is that of tRNA pseudouridine synthase B from Oleidesulfovibrio alaskensis (strain ATCC BAA-1058 / DSM 17464 / G20) (Desulfovibrio alaskensis).